The primary structure comprises 429 residues: 3-phosphoshikimate 1-carboxyvinyltransferase (429 aa).

The 3-phosphoshikimate site is built by Lys23, Ser24, and Arg28. Lys23 contributes to the phosphoenolpyruvate binding site. Phosphoenolpyruvate contacts are provided by Gly97 and Arg125. Positions 170, 171, 172, 198, 314, 338, and 342 each coordinate 3-phosphoshikimate. Gln172 provides a ligand contact to phosphoenolpyruvate. The active-site Proton acceptor is the Asp314. Positions 346, 388, and 413 each coordinate phosphoenolpyruvate.

Belongs to the EPSP synthase family. Monomer.

It is found in the cytoplasm. The enzyme catalyses 3-phosphoshikimate + phosphoenolpyruvate = 5-O-(1-carboxyvinyl)-3-phosphoshikimate + phosphate. Its pathway is metabolic intermediate biosynthesis; chorismate biosynthesis; chorismate from D-erythrose 4-phosphate and phosphoenolpyruvate: step 6/7. Functionally, catalyzes the transfer of the enolpyruvyl moiety of phosphoenolpyruvate (PEP) to the 5-hydroxyl of shikimate-3-phosphate (S3P) to produce enolpyruvyl shikimate-3-phosphate and inorganic phosphate. The chain is 3-phosphoshikimate 1-carboxyvinyltransferase from Pectobacterium carotovorum subsp. carotovorum (strain PC1).